Reading from the N-terminus, the 184-residue chain is Ribosome-recycling factor (184 aa).

Residues 133–153 (DSNDELKKQQKNSDITEDDLR) are disordered.

It belongs to the RRF family.

It is found in the cytoplasm. In terms of biological role, responsible for the release of ribosomes from messenger RNA at the termination of protein biosynthesis. May increase the efficiency of translation by recycling ribosomes from one round of translation to another. This is Ribosome-recycling factor from Staphylococcus saprophyticus subsp. saprophyticus (strain ATCC 15305 / DSM 20229 / NCIMB 8711 / NCTC 7292 / S-41).